A 353-amino-acid chain; its full sequence is Protein Wnt-11b-2 (353 aa).

The first 22 residues, 1 to 22 (MALIRHCVTLLLILCCSRLCGA), serve as a signal peptide directing secretion. N-linked (GlcNAc...) asparagine glycosylation is found at N31, N38, and N88. Disulfide bonds link C78–C89, C128–C136, C138–C155, C208–C222, and C210–C217. A lipid anchor (O-palmitoleoyl serine; by PORCN) is attached at S214. A sulfotyrosine mark is found at Y274 and Y281. 6 disulfides stabilise this stretch: C282/C313, C298/C308, C312/C352, C328/C343, C330/C340, and C335/C336. N-linked (GlcNAc...) asparagine glycosylation occurs at N299.

This sequence belongs to the Wnt family. As to quaternary structure, homodimer. Secreted homodimers form a complex with wnt5a homodimers; tyrosine sulfation of both wnt11 and wnt5a by tpst1 is required for this interaction. Interacts with the transmembrane receptor fzd7/fz7. Interacts with lrp6 and ryk. Interacts with tdgf1/frl1. Interacts weakly with frzb1 and strongly with frzb2/crescent. Interaction with frzb2/crescent antagonizes wnt11 function in the neuroectoderm, but enhances it in mesodermal tissue. Glycosylation is required for protein secretion. Post-translationally, palmitoleoylation is required for efficient binding to frizzled receptors. Depalmitoleoylation leads to Wnt signaling pathway inhibition.

The protein localises to the secreted. It localises to the extracellular space. The protein resides in the extracellular matrix. Functionally, ligand for the frizzled7 transmembrane receptor. Primarily acts via non-canonical Wnt pathways mediated by either Ca(2+) and PKC, or by JNK and dvl2/dsh. Depending on the cellular context, can also signal via the canonical Wnt pathway mediated by beta-catenin and dvl2/dsh. May also inhibit canonical Wnt signaling. Maternally initiates dorsal/ventral axis formation by a canonical route, which signals via lrp6. In a complex with wnt5a, activates the canonical and non-canonical processes involved in axis formation. In the non-canonical pathway, acts through fzd7/fz7 to induce phosphorylation of dvl2/dsh. Signals through a non-canonical Wnt pathway to regulate convergent extension movements during gastrulation. Interactions with the secreted Wnt antagonist sfrp5 to coordinate foregut development, acting via a non-canonical wnt pathway whereby sfrp5 restricts wnt11b activity to prevent inappropriate foregut formation. Mediates cardiogenesis via non-canonical Wnt signaling involving JNK-activation and PKC. Acts redundantly with wnt11/wnt11r during pronephros induction. The polypeptide is Protein Wnt-11b-2 (Xenopus tropicalis (Western clawed frog)).